The following is a 206-amino-acid chain: Large ribosomal subunit protein uL3 (206 aa).

Residues 127–151 (SGGPSSHGSKFHRHLGGTGQATTPA) form a disordered region.

It belongs to the universal ribosomal protein uL3 family. As to quaternary structure, part of the 50S ribosomal subunit. Forms a cluster with proteins L14 and L19.

Its function is as follows. One of the primary rRNA binding proteins, it binds directly near the 3'-end of the 23S rRNA, where it nucleates assembly of the 50S subunit. The polypeptide is Large ribosomal subunit protein uL3 (Borreliella afzelii (strain PKo) (Borrelia afzelii)).